Reading from the N-terminus, the 617-residue chain is Protein fem-1 homolog C (617 aa).

Met-1 bears the N-acetylmethionine mark. 7 ANK repeats span residues 2 to 31 (DLKT…KEEV), 40 to 70 (NGAT…SIEV), 82 to 111 (EGAP…SVNN), 115 to 144 (TNST…DLEV), 148 to 177 (HGHT…DVNR), 181 to 210 (KGNT…KMEK), and 213 to 242 (YGMT…TSKT). 2 TPR repeats span residues 245 to 279 (INAL…RYSD) and 338 to 371 (SYYI…QQSN). 2 ANK repeats span residues 481-523 (NNFS…DVNV) and 527-556 (DDNS…HFDA).

Belongs to the fem-1 family. In terms of assembly, component of a Cul2-RING (CRL2) E3 ubiquitin-protein ligase complex, also named ECS (Elongin BC-CUL2/5-SOCS-box protein) complex, composed of CUL2, Elongin BC (ELOB and ELOC), RBX1 and substrate-specific adapter FEM1C. Widely expressed. Highly expressed in kidney, cardiac tissue, skeletal muscle and testis. Expressed at lower levels in other tissues, including cartilage.

It participates in protein modification; protein ubiquitination. Substrate-recognition component of a Cul2-RING (CRL2) E3 ubiquitin-protein ligase complex of the DesCEND (destruction via C-end degrons) pathway, which recognizes a C-degron located at the extreme C terminus of target proteins, leading to their ubiquitination and degradation. The C-degron recognized by the DesCEND pathway is usually a motif of less than ten residues and can be present in full-length proteins, truncated proteins or proteolytically cleaved forms. The CRL2(FEM1C) complex specifically recognizes proteins with an arginine at the C-terminus: recognizes and binds proteins ending with -Lys/Arg-Xaa-Arg and -Lys/Arg-Xaa-Xaa-Arg C-degrons, such as SIL1 or OR51B2, leading to their ubiquitination and degradation. The CRL2(FEM1C) complex mediates ubiquitination and degradation of truncated MSRB1/SEPX1 selenoproteins produced by failed UGA/Sec decoding. Promotes ubiquitination and degradation of SLBP. This Homo sapiens (Human) protein is Protein fem-1 homolog C.